The following is a 274-amino-acid chain: 2,3,4,5-tetrahydropyridine-2,6-dicarboxylate N-succinyltransferase (274 aa).

Positions 107 and 144 each coordinate substrate.

It belongs to the transferase hexapeptide repeat family. Homotrimer.

The protein localises to the cytoplasm. It catalyses the reaction (S)-2,3,4,5-tetrahydrodipicolinate + succinyl-CoA + H2O = (S)-2-succinylamino-6-oxoheptanedioate + CoA. It participates in amino-acid biosynthesis; L-lysine biosynthesis via DAP pathway; LL-2,6-diaminopimelate from (S)-tetrahydrodipicolinate (succinylase route): step 1/3. The protein is 2,3,4,5-tetrahydropyridine-2,6-dicarboxylate N-succinyltransferase of Paracoccus denitrificans (strain Pd 1222).